The chain runs to 429 residues: Serine--tRNA ligase (429 aa).

Position 236–238 (236–238 (TAE)) interacts with L-serine. 267–269 (RRE) is a binding site for ATP. Residue Glu290 coordinates L-serine. ATP is bound at residue 354-357 (EISS). An L-serine-binding site is contributed by Ser390.

Belongs to the class-II aminoacyl-tRNA synthetase family. Type-1 seryl-tRNA synthetase subfamily. In terms of assembly, homodimer. The tRNA molecule binds across the dimer.

The protein localises to the cytoplasm. It catalyses the reaction tRNA(Ser) + L-serine + ATP = L-seryl-tRNA(Ser) + AMP + diphosphate + H(+). It carries out the reaction tRNA(Sec) + L-serine + ATP = L-seryl-tRNA(Sec) + AMP + diphosphate + H(+). The protein operates within aminoacyl-tRNA biosynthesis; selenocysteinyl-tRNA(Sec) biosynthesis; L-seryl-tRNA(Sec) from L-serine and tRNA(Sec): step 1/1. Its function is as follows. Catalyzes the attachment of serine to tRNA(Ser). Is also able to aminoacylate tRNA(Sec) with serine, to form the misacylated tRNA L-seryl-tRNA(Sec), which will be further converted into selenocysteinyl-tRNA(Sec). This chain is Serine--tRNA ligase, found in Gloeobacter violaceus (strain ATCC 29082 / PCC 7421).